Here is a 2002-residue protein sequence, read N- to C-terminus: [F-actin]-monooxygenase MICAL3 (2002 aa).

Positions 2–494 are monooxygenase domain; sequence EERKHETMNP…RHLYDTGETK (493 aa). FAD is bound by residues Cys-97, 116 to 118, 123 to 125, Phe-183, Tyr-298, and Asp-398; these read EKR and RNN. One can recognise a Calponin-homology (CH) domain in the interval 518–624; it reads VARSSKLLGW…YLTQFYEMFK (107 aa). Ser-649 is modified (phosphoserine). The interval 658–706 is disordered; the sequence is GQTISRKRSPKDKKEKDLDGAGKRRKTSQSEEEEAPRGHRGERPTLVST. The short motif at 663–684 is the Nuclear localization signal element; the sequence is RKRSPKDKKEKDLDGAGKRRKT. The span at 669 to 679 shows a compositional bias: basic and acidic residues; that stretch reads DKKEKDLDGAG. Ser-685 and Ser-687 each carry phosphoserine. The LIM zinc-binding domain occupies 762 to 824; sequence DTCYFCQKRV…KPHYCYRLSG (63 aa). Zn(2+) is bound by residues Cys-764, Cys-767, His-785, Cys-788, Cys-791, Cys-794, Cys-814, and His-817. The disordered stretch occupies residues 835–883; that stretch reads PLSGKEAKGPLQDGATTDANGRANAVASSTERTPGSGVNGLEEPSIAKR. Thr-887 is subject to Phosphothreonine. Disordered regions lie at residues 907–1313, 1335–1776, and 1791–1821; these read QEVP…SPLA, RRSL…GKHR, and LSFS…TYTE. Residues 938 to 950 show a composition bias toward acidic residues; it reads SEMEEEGEEEEEE. Phosphoserine is present on Ser-977. A compositionally biased stretch (acidic residues) spans 991–1017; that stretch reads NEEEEEEEEEYEEEEEEDYDEEEEESS. The span at 1041 to 1054 shows a compositional bias: basic and acidic residues; it reads HWTHIREREEEERM. Positions 1055-1066 are enriched in low complexity; it reads APASESSASGAP. Over residues 1068–1102 the composition is skewed to acidic residues; sequence DENDLEEDVDSEPAEIEGEAAEDGDPGDTGAELDD. A phosphoserine mark is found at Ser-1134, Ser-1143, Ser-1160, and Ser-1192. Residues 1150-1163 show a composition bias toward polar residues; that stretch reads GPSQATSPIRSPQE. The span at 1191–1218 shows a compositional bias: basic and acidic residues; that stretch reads KSPEERLFPEPLLPKEKPKADAPSDLKA. Pro residues predominate over residues 1239-1258; sequence PGSPQPQPPVAASTPPPSPL. Composition is skewed to polar residues over residues 1268-1280 and 1288-1302; these read TEAT…QSPI and KTST…QSQS. Residue Ser-1274 is modified to Phosphoserine. Thr-1276 carries the post-translational modification Phosphothreonine. Residue Ser-1278 is modified to Phosphoserine. Phosphoserine is present on residues Ser-1310 and Ser-1337. Thr-1341 is modified (phosphothreonine). Residues Ser-1371 and Ser-1384 each carry the phosphoserine modification. Residues 1407-1422 are compositionally biased toward basic and acidic residues; the sequence is PSDRELRSAQEERREL. Low complexity predominate over residues 1423–1435; it reads SSSSGLGLHGSSS. Ser-1433 is modified (phosphoserine). A compositionally biased stretch (polar residues) spans 1436 to 1451; that stretch reads NMKTLGSQSFNTSDSA. Thr-1454 is subject to Phosphothreonine. Positions 1456–1467 are enriched in pro residues; that stretch reads PSSPPPPPPPGE. Acidic residues predominate over residues 1516–1530; sequence SVEEIPFADDVEDTY. Basic and acidic residues predominate over residues 1588–1604; the sequence is EAKELAEERMRAREKSV. A Phosphoserine modification is found at Ser-1649. At Thr-1651 the chain carries Phosphothreonine. The segment covering 1657 to 1668 has biased composition (basic and acidic residues); that stretch reads GSEEPTLKHEAT. The segment covering 1674–1694 has biased composition (low complexity); that stretch reads SPPSDSGGPDGSFTSSEGSSG. Residues 1695-1713 are compositionally biased toward basic residues; that stretch reads KSKKRSSLFSPRRNKKEKK. 2 positions are modified to phosphoserine: Ser-1701 and Ser-1704. A compositionally biased stretch (polar residues) spans 1760–1769; that stretch reads CPSTPSSGAT. Residues 1804 to 1820 are compositionally biased toward basic and acidic residues; it reads VLEKSSQKSRREPRTYT. Residues 1821–1992 adopt a coiled-coil conformation; the sequence is EEELNAKLTR…EEDKDLEAAM (172 aa). One can recognise a bMERB domain in the interval 1841–1990; that stretch reads KQEELKRLHR…EREEDKDLEA (150 aa). Ser-1912 is subject to Phosphoserine.

The protein belongs to the Mical family. In terms of assembly, interacts with RAB1B, RAB8A, RAB10, RAB13 and RAB15 (in their GTP-bound forms); binding to RAB1B is of low affinity compared to other Rab proteins; at least in case of RAB8A can bind 2 molecules of RAB8A simultaneously through a high and a low affinity binding site, respectively. Interacts with ERC1 and RAB8A; may bridge ERC1 with RAB8A. Interacts with KIF23 and ERC1; enhances the interaction between KIF23 and ERC1. Interacts with NINL isoform 2. FAD serves as cofactor. In terms of tissue distribution, ubiquitous.

The protein resides in the cytoplasm. The protein localises to the cell cortex. It is found in the cytoskeleton. It localises to the nucleus. Its subcellular location is the midbody. The protein resides in the spindle. The protein localises to the cilium basal body. The catalysed reaction is L-methionyl-[F-actin] + NADPH + O2 + H(+) = L-methionyl-(R)-S-oxide-[F-actin] + NADP(+) + H2O. Functionally, monooxygenase that promotes depolymerization of F-actin by mediating oxidation of specific methionine residues on actin to form methionine-sulfoxide, resulting in actin filament disassembly and preventing repolymerization. In the absence of actin, it also functions as a NADPH oxidase producing H(2)O(2). Seems to act as Rab effector protein and plays a role in vesicle trafficking. Involved in exocytic vesicles tethering and fusion: the monooxygenase activity is required for this process and implicates RAB8A associated with exocytotic vesicles. Required for cytokinesis. Contributes to stabilization and/or maturation of the intercellular bridge independently of its monooxygenase activity. Promotes recruitment of Rab8 and ERC1 to the intercellular bridge, and together these proteins are proposed to function in timely abscission. In Homo sapiens (Human), this protein is [F-actin]-monooxygenase MICAL3 (MICAL3).